Here is a 93-residue protein sequence, read N- to C-terminus: uncharacterized protein (93 aa).

It belongs to the BolA/IbaG family.

This is an uncharacterized protein from Sinorhizobium sp.